Reading from the N-terminus, the 405-residue chain is Lipase lipl-1 (405 aa).

The N-terminal stretch at 1-20 is a signal peptide; it reads MRSWSTVMLAVLATAATVFG. N66 carries N-linked (GlcNAc...) asparagine glycosylation. S169 serves as the catalytic Nucleophile. N273 carries N-linked (GlcNAc...) asparagine glycosylation. Residues D344 and H376 each act as charge relay system in the active site.

It belongs to the AB hydrolase superfamily. Lipase family.

It localises to the secreted. Its subcellular location is the lysosome lumen. Functionally, lipase that, together with lipl-3, plays a role in the response to nutrient deprivation by controlling lipid metabolism. Specifically, involved in the breakdown of lipids during lipophagy, a process during which lipids contained in lipid droplets that have been delivered to lysosomes by autophagy are degraded. This Caenorhabditis elegans protein is Lipase lipl-1.